The chain runs to 399 residues: Elongation factor Tu (399 aa).

Positions 10 to 204 (KPHVNIGTIG…AVDASIPEPE (195 aa)) constitute a tr-type G domain. Residues 19 to 26 (GHVDHGKT) form a G1 region. Residue 19-26 (GHVDHGKT) coordinates GTP. T26 provides a ligand contact to Mg(2+). The segment at 60–64 (GITIN) is G2. A G3 region spans residues 81–84 (DCPG). GTP contacts are provided by residues 81–85 (DCPGH) and 136–139 (NKCD). The tract at residues 136-139 (NKCD) is G4. A G5 region spans residues 174–176 (SGL).

Belongs to the TRAFAC class translation factor GTPase superfamily. Classic translation factor GTPase family. EF-Tu/EF-1A subfamily. Monomer.

It localises to the cytoplasm. It catalyses the reaction GTP + H2O = GDP + phosphate + H(+). Its function is as follows. GTP hydrolase that promotes the GTP-dependent binding of aminoacyl-tRNA to the A-site of ribosomes during protein biosynthesis. The chain is Elongation factor Tu from Prochlorococcus marinus (strain MIT 9312).